Reading from the N-terminus, the 400-residue chain is 2'-5'-oligoadenylate synthase 1 (400 aa).

The interaction with dsRNA stretch occupies residues 13 to 60; that stretch reads DKFIEDYLLPDTCFRMQINHAIDIICGFLKERCFRGSSYPVCVSKVVK. Serine 63 provides a ligand contact to ATP. Mg(2+) contacts are provided by aspartate 75, aspartate 77, and aspartate 148. The interval 200-210 is interaction with dsRNA; sequence QRPTKLKSLIR. ATP contacts are provided by arginine 210, lysine 213, and glutamine 229. Cysteine 397 carries S-geranylgeranyl cysteine lipidation.

It belongs to the 2-5A synthase family. In terms of assembly, monomer. Homotetramer. Mg(2+) is required as a cofactor. Prenylated at C-terminal. C-terminal prenylation is necessary to initiate a block to SARS-CoV-2 and is associated with protection from severe COVID-1. The prenylated form is targeted to perinuclear structures rich in viral dsRNA, whereas the non-prenylated form is diffusely localized and unable to initiate a detectable block to SARS-CoV-2 replication. C-terminal prenylation is also necessary to initiate a block to cardiovirus EMCV. In terms of processing, not prenylated at C-terminal. The non-prenylated form is diffusely localized and unable to initiate a detectable block to SARS-CoV-2 replication. As to expression, expressed in lungs.

It localises to the cytoplasm. It is found in the mitochondrion. The protein resides in the nucleus. Its subcellular location is the microsome. The protein localises to the endoplasmic reticulum. It localises to the secreted. The catalysed reaction is 3 ATP = 5'-triphosphoadenylyl-(2'-&gt;5')-adenylyl-(2'-&gt;5')-adenosine + 2 diphosphate. With respect to regulation, produced as a latent enzyme which is activated by dsRNA generated during the course of viral infection. The dsRNA activator must be at least 15 nucleotides long, and no modification of the 2'-hydroxyl group is tolerated. ssRNA or dsDNA do not act as activators. Its function is as follows. Interferon-induced, dsRNA-activated antiviral enzyme which plays a critical role in cellular innate antiviral response. In addition, it may also play a role in other cellular processes such as apoptosis, cell growth, differentiation and gene regulation. Synthesizes higher oligomers of 2'-5'-oligoadenylates (2-5A) from ATP which then bind to the inactive monomeric form of ribonuclease L (RNase L) leading to its dimerization and subsequent activation. Activation of RNase L leads to degradation of cellular as well as viral RNA, resulting in the inhibition of protein synthesis, thus terminating viral replication. Can mediate the antiviral effect via the classical RNase L-dependent pathway or an alternative antiviral pathway independent of RNase L. The secreted form displays antiviral effect against vesicular stomatitis virus (VSV), herpes simplex virus type 2 (HSV-2), and encephalomyocarditis virus (EMCV) and stimulates the alternative antiviral pathway independent of RNase L. In terms of biological role, when prenylated at C-terminal, acts as a double-stranded RNA (dsRNA) sensor specifically targeted to membranous replicative organelles in SARS coronavirus-2/SARS-CoV-2 infected cells where it binds to dsRNA structures in the SARS-CoV-2 5'-UTR and initiates a potent block to SARS-CoV-2 replication. Recognizes short stretches of dsRNA and activates RNase L. The binding is remarkably specific, with two conserved stem loops in the SARS-CoV-2 5'- untranslated region (UTR) constituting the principal viral target. The same mechanism is necessary to initiate a block to cardiovirus EMCV. Functionally, not prenylated at C-terminal, is diffusely localized and unable to initiate a detectable block to SARS-CoV-2 replication. This chain is 2'-5'-oligoadenylate synthase 1 (OAS1), found in Homo sapiens (Human).